Here is a 358-residue protein sequence, read N- to C-terminus: Isopentenyl-diphosphate delta-isomerase (358 aa).

R12–K13 contacts substrate. FMN-binding positions include A69 to T71, S99, and N128. Q158 provides a ligand contact to substrate. Position 159 (E159) interacts with Mg(2+). Residues K190, T220, G267–R269, and A288–G289 contribute to the FMN site.

The protein belongs to the IPP isomerase type 2 family. As to quaternary structure, homooctamer. Dimer of tetramers. Requires FMN as cofactor. The cofactor is NADPH. Mg(2+) serves as cofactor.

It localises to the cytoplasm. The catalysed reaction is isopentenyl diphosphate = dimethylallyl diphosphate. Functionally, involved in the biosynthesis of isoprenoids. Catalyzes the 1,3-allylic rearrangement of the homoallylic substrate isopentenyl (IPP) to its allylic isomer, dimethylallyl diphosphate (DMAPP). This is Isopentenyl-diphosphate delta-isomerase from Listeria innocua serovar 6a (strain ATCC BAA-680 / CLIP 11262).